A 525-amino-acid chain; its full sequence is Potassium voltage-gated channel subfamily A member 3 (525 aa).

Positions 1 to 23 are disordered; sequence MTVVPGDHLLEPEAAGGGGGDPP. The Cytoplasmic segment spans residues 1 to 184; that stretch reads MTVVPGDHLL…EYPESSGPAR (184 aa). Residues 185–203 traverse the membrane as a helical segment; the sequence is GIAIVSVLVILISIVIFCL. The Extracellular portion of the chain corresponds to 204–244; the sequence is ETLPEFRDEKDYPASPSQDVFEAANNSTSGASSGASSFSDP. An N-linked (GlcNAc...) asparagine glycan is attached at Asn-229. The helical transmembrane segment at 245 to 266 threads the bilayer; it reads FFVVETLCIIWFSFELLVRFFA. Cys-267 is lipidated: S-palmitoyl cysteine. At 267–277 the chain is on the cytoplasmic side; sequence CPSKATFSRNI. Residues 278 to 298 traverse the membrane as a helical segment; it reads MNLIDIVAIIPYFITLGTELA. Residues 299–312 lie on the Extracellular side of the membrane; that stretch reads ERQGNGQQAMSLAI. Residues 313 to 331 form a helical; Voltage-sensor membrane-spanning segment; it reads LRVIRLVRVFRIFKLSRHS. The Cytoplasmic portion of the chain corresponds to 332-347; the sequence is KGLQILGQTLKASMRE. The helical transmembrane segment at 348–367 threads the bilayer; sequence LGLLIFFLFIGVILFSSAVY. At 368–408 the chain is on the extracellular side; the sequence is FAEADDPSSGFNSIPDAFWWAVVTMTTVGYGDMHPVTIGGK. The short motif at 394–399 is the Selectivity filter element; the sequence is TVGYGD. The helical transmembrane segment at 409-431 threads the bilayer; sequence IVGSLCAIAGVLTIALPVPVIVS. At 432–525 the chain is on the cytoplasmic side; it reads NFNYFYHRET…VNIKKIFTDV (94 aa). Positions 432-525 are interaction with KCNE4; sequence NFNYFYHRET…VNIKKIFTDV (94 aa). Tyr-449 bears the Phosphotyrosine mark. Residue Ser-470 is modified to Phosphoserine; by PKA. Residues 523-525 carry the PDZ-binding motif; that stretch reads TDV.

It belongs to the potassium channel family. A (Shaker) (TC 1.A.1.2) subfamily. Kv1.3/KCNA3 sub-subfamily. In terms of assembly, homotetramer. Forms heterooligomers with KCNE4 which inhibits KCNA3 activity by impairing localization to the cell membrane. The stoichiometry of KCNA3 and KCNE4 in the heterooligomers are 4:1, 4:2, 4:3 or 4:4 respectively. Increasing the number of KCNE4 subunits steadily slows the activation KCNA3 and decreases its abundance at the cell membrane. However, a single subunit of KCNE4 is sufficient for the cooperative enhancement of the inactivating function of the channel. Interacts with SEC24D; this interaction is reduced in the presence of KCNE4. Interacts with DLG1, DLG2 and DLG4 via their PDZ domains. Phosphorylation on Tyr-449 inhibits its channel activity. In terms of processing, N-glycosylation promotes the cell surface expression.

The protein localises to the cell membrane. The catalysed reaction is K(+)(in) = K(+)(out). With respect to regulation, activity is up-regulated by JAK2. Functionally, mediates the voltage-dependent potassium ion permeability of excitable membranes. Assuming opened or closed conformations in response to the voltage difference across the membrane, the protein forms a potassium-selective channel through which potassium ions may pass in accordance with their electrochemical gradient. The polypeptide is Potassium voltage-gated channel subfamily A member 3 (Kcna3) (Rattus norvegicus (Rat)).